A 945-amino-acid chain; its full sequence is Isoleucine--tRNA ligase (945 aa).

A 'HIGH' region motif is present at residues proline 67–histidine 77. Position 573 (glutamate 573) interacts with L-isoleucyl-5'-AMP. The 'KMSKS' region signature appears at lysine 614–serine 618. Residue lysine 617 participates in ATP binding. 4 residues coordinate Zn(2+): cysteine 908, cysteine 911, cysteine 928, and cysteine 931.

It belongs to the class-I aminoacyl-tRNA synthetase family. IleS type 1 subfamily. As to quaternary structure, monomer. It depends on Zn(2+) as a cofactor.

It is found in the cytoplasm. It carries out the reaction tRNA(Ile) + L-isoleucine + ATP = L-isoleucyl-tRNA(Ile) + AMP + diphosphate. Functionally, catalyzes the attachment of isoleucine to tRNA(Ile). As IleRS can inadvertently accommodate and process structurally similar amino acids such as valine, to avoid such errors it has two additional distinct tRNA(Ile)-dependent editing activities. One activity is designated as 'pretransfer' editing and involves the hydrolysis of activated Val-AMP. The other activity is designated 'posttransfer' editing and involves deacylation of mischarged Val-tRNA(Ile). The protein is Isoleucine--tRNA ligase of Acinetobacter baylyi (strain ATCC 33305 / BD413 / ADP1).